Reading from the N-terminus, the 373-residue chain is Muconate cycloisomerase 1 (373 aa).

Residue Lys-169 is part of the active site. Lys-169 (proton acceptor) is an active-site residue. The Mn(2+) site is built by Asp-198, Glu-224, and Asp-249. Residue Glu-327 is the Proton donor of the active site.

It belongs to the mandelate racemase/muconate lactonizing enzyme family. Requires Mn(2+) as cofactor.

It carries out the reaction (S)-muconolactone = cis,cis-muconate + H(+). The protein is Muconate cycloisomerase 1 (catB) of Rhodococcus opacus (Nocardia opaca).